Here is a 545-residue protein sequence, read N- to C-terminus: CTP synthase (545 aa).

Residues 1-265 (MSKYIFVTGG…DDLVVQNLGL (265 aa)) form an amidoligase domain region. A CTP-binding site is contributed by Ser13. Ser13 lines the UTP pocket. Residues 14 to 19 (SLGKGA) and Asp71 each bind ATP. Residues Asp71 and Glu139 each contribute to the Mg(2+) site. CTP is bound by residues 146 to 148 (DIE), 186 to 191 (KTKPTQ), and Lys222. Residues 186-191 (KTKPTQ) and Lys222 each bind UTP. In terms of domain architecture, Glutamine amidotransferase type-1 spans 290–541 (VIALVGKYVG…MRAAIAQRER (252 aa)). Gly351 contacts L-glutamine. Catalysis depends on Cys378, which acts as the Nucleophile; for glutamine hydrolysis. Residues 379–382 (LGMQ), Glu402, and Arg469 each bind L-glutamine. Active-site residues include His514 and Glu516.

Belongs to the CTP synthase family. In terms of assembly, homotetramer.

It carries out the reaction UTP + L-glutamine + ATP + H2O = CTP + L-glutamate + ADP + phosphate + 2 H(+). The catalysed reaction is L-glutamine + H2O = L-glutamate + NH4(+). The enzyme catalyses UTP + NH4(+) + ATP = CTP + ADP + phosphate + 2 H(+). Its pathway is pyrimidine metabolism; CTP biosynthesis via de novo pathway; CTP from UDP: step 2/2. Its activity is regulated as follows. Allosterically activated by GTP, when glutamine is the substrate; GTP has no effect on the reaction when ammonia is the substrate. The allosteric effector GTP functions by stabilizing the protein conformation that binds the tetrahedral intermediate(s) formed during glutamine hydrolysis. Inhibited by the product CTP, via allosteric rather than competitive inhibition. Functionally, catalyzes the ATP-dependent amination of UTP to CTP with either L-glutamine or ammonia as the source of nitrogen. Regulates intracellular CTP levels through interactions with the four ribonucleotide triphosphates. This is CTP synthase from Acidithiobacillus ferrooxidans (strain ATCC 23270 / DSM 14882 / CIP 104768 / NCIMB 8455) (Ferrobacillus ferrooxidans (strain ATCC 23270)).